The chain runs to 230 residues: RNA polymerase sigma factor FliA (230 aa).

Residues L6 to W78 are sigma-70 factor domain-2. Positions D33 to Q36 match the Interaction with polymerase core subunit RpoC motif. A sigma-70 factor domain-3 region spans residues N86–D156. The tract at residues A175–R223 is sigma-70 factor domain-4. Positions L197–S216 form a DNA-binding region, H-T-H motif.

Belongs to the sigma-70 factor family. FliA subfamily.

It is found in the cytoplasm. In terms of biological role, sigma factors are initiation factors that promote the attachment of RNA polymerase to specific initiation sites and are then released. This sigma factor controls the expression of flagella-related genes. In Yersinia enterocolitica, this protein is RNA polymerase sigma factor FliA.